Here is a 616-residue protein sequence, read N- to C-terminus: Dihydroxy-acid dehydratase (616 aa).

Asp-81 contacts Mg(2+). A [2Fe-2S] cluster-binding site is contributed by Cys-122. Mg(2+) is bound by residues Asp-123 and Lys-124. Lys-124 is modified (N6-carboxylysine). Cys-195 provides a ligand contact to [2Fe-2S] cluster. Residue Glu-491 coordinates Mg(2+). Ser-517 functions as the Proton acceptor in the catalytic mechanism.

This sequence belongs to the IlvD/Edd family. As to quaternary structure, homodimer. Requires [2Fe-2S] cluster as cofactor. The cofactor is Mg(2+).

The catalysed reaction is (2R)-2,3-dihydroxy-3-methylbutanoate = 3-methyl-2-oxobutanoate + H2O. It catalyses the reaction (2R,3R)-2,3-dihydroxy-3-methylpentanoate = (S)-3-methyl-2-oxopentanoate + H2O. The protein operates within amino-acid biosynthesis; L-isoleucine biosynthesis; L-isoleucine from 2-oxobutanoate: step 3/4. It functions in the pathway amino-acid biosynthesis; L-valine biosynthesis; L-valine from pyruvate: step 3/4. Functions in the biosynthesis of branched-chain amino acids. Catalyzes the dehydration of (2R,3R)-2,3-dihydroxy-3-methylpentanoate (2,3-dihydroxy-3-methylvalerate) into 2-oxo-3-methylpentanoate (2-oxo-3-methylvalerate) and of (2R)-2,3-dihydroxy-3-methylbutanoate (2,3-dihydroxyisovalerate) into 2-oxo-3-methylbutanoate (2-oxoisovalerate), the penultimate precursor to L-isoleucine and L-valine, respectively. The protein is Dihydroxy-acid dehydratase of Blochmanniella pennsylvanica (strain BPEN).